Consider the following 546-residue polypeptide: CTP synthase (546 aa).

The tract at residues 1–269 is amidoligase domain; it reads MNSNTKIIFV…DAKLVELLNL (269 aa). S16 provides a ligand contact to CTP. S16 lines the UTP pocket. Residues 17–22 and D74 each bind ATP; that span reads SLGKGV. Mg(2+) is bound by residues D74 and E143. CTP contacts are provided by residues 150–152, 190–195, and K226; these read DIE and KTKPTQ. UTP is bound by residues 190 to 195 and K226; that span reads KTKPTQ. One can recognise a Glutamine amidotransferase type-1 domain in the interval 294–546; it reads TIAMVGKYVS…IQAAIENSNN (253 aa). G356 contributes to the L-glutamine binding site. Catalysis depends on C383, which acts as the Nucleophile; for glutamine hydrolysis. Residues 384 to 387, E407, and R474 each bind L-glutamine; that span reads LGMQ. Active-site residues include H519 and E521.

The protein belongs to the CTP synthase family. In terms of assembly, homotetramer.

The catalysed reaction is UTP + L-glutamine + ATP + H2O = CTP + L-glutamate + ADP + phosphate + 2 H(+). It carries out the reaction L-glutamine + H2O = L-glutamate + NH4(+). It catalyses the reaction UTP + NH4(+) + ATP = CTP + ADP + phosphate + 2 H(+). It functions in the pathway pyrimidine metabolism; CTP biosynthesis via de novo pathway; CTP from UDP: step 2/2. With respect to regulation, allosterically activated by GTP, when glutamine is the substrate; GTP has no effect on the reaction when ammonia is the substrate. The allosteric effector GTP functions by stabilizing the protein conformation that binds the tetrahedral intermediate(s) formed during glutamine hydrolysis. Inhibited by the product CTP, via allosteric rather than competitive inhibition. In terms of biological role, catalyzes the ATP-dependent amination of UTP to CTP with either L-glutamine or ammonia as the source of nitrogen. Regulates intracellular CTP levels through interactions with the four ribonucleotide triphosphates. The polypeptide is CTP synthase (Francisella tularensis subsp. tularensis (strain FSC 198)).